The following is a 235-amino-acid chain: Phosphoribosylaminoimidazole-succinocarboxamide synthase (235 aa).

Belongs to the SAICAR synthetase family.

It catalyses the reaction 5-amino-1-(5-phospho-D-ribosyl)imidazole-4-carboxylate + L-aspartate + ATP = (2S)-2-[5-amino-1-(5-phospho-beta-D-ribosyl)imidazole-4-carboxamido]succinate + ADP + phosphate + 2 H(+). Its pathway is purine metabolism; IMP biosynthesis via de novo pathway; 5-amino-1-(5-phospho-D-ribosyl)imidazole-4-carboxamide from 5-amino-1-(5-phospho-D-ribosyl)imidazole-4-carboxylate: step 1/2. This is Phosphoribosylaminoimidazole-succinocarboxamide synthase from Streptococcus pneumoniae (strain ATCC 700669 / Spain 23F-1).